Reading from the N-terminus, the 153-residue chain is NAD(P)H-quinone oxidoreductase subunit N (153 aa).

It belongs to the complex I NdhN subunit family. NDH-1 can be composed of about 15 different subunits; different subcomplexes with different compositions have been identified which probably have different functions.

Its subcellular location is the cellular thylakoid membrane. The enzyme catalyses a plastoquinone + NADH + (n+1) H(+)(in) = a plastoquinol + NAD(+) + n H(+)(out). The catalysed reaction is a plastoquinone + NADPH + (n+1) H(+)(in) = a plastoquinol + NADP(+) + n H(+)(out). NDH-1 shuttles electrons from an unknown electron donor, via FMN and iron-sulfur (Fe-S) centers, to quinones in the respiratory and/or the photosynthetic chain. The immediate electron acceptor for the enzyme in this species is believed to be plastoquinone. Couples the redox reaction to proton translocation, and thus conserves the redox energy in a proton gradient. Cyanobacterial NDH-1 also plays a role in inorganic carbon-concentration. In Prochlorococcus marinus (strain MIT 9303), this protein is NAD(P)H-quinone oxidoreductase subunit N.